A 354-amino-acid chain; its full sequence is Membrane progestin receptor beta (354 aa).

Topologically, residues 1 to 75 (MTTAILQRLS…FFSLFQKHNE (75 aa)) are cytoplasmic. A helical transmembrane segment spans residues 76-96 (VVNVWTHLLAALAVLLRFWAF). Residues 97 to 111 (VETEGLPWTSAHTLP) are Extracellular-facing. Residues 112–132 (LLLYVLSSITYLTFSLLAHLL) traverse the membrane as a helical segment. Over 133-174 (QSKSELSHYTFYFVDYVGVSVYQYGSALVHFFYASDQAWYER) the chain is Cytoplasmic. The helical transmembrane segment at 175 to 195 (FWLFFLPAAAFCGWLSCTGCC) threads the bilayer. At 196-213 (YAKYRYRRPYPVMRKVCQ) the chain is on the extracellular side. The chain crosses the membrane as a helical span at residues 214–234 (VVPAGLAFILDISPVAHRVAL). Over 235–243 (CHLSGCQEQ) the chain is Cytoplasmic. A helical membrane pass occupies residues 244-264 (AAWYHTLQIVFFLVSAYFFSC). At 265 to 283 (PVPEKYFPGSCDIVGHGHQ) the chain is on the extracellular side. Residues 284–304 (IFHAFLSICTLSQLEAILLDY) form a helical membrane-spanning segment. Residues 305 to 319 (KGRQEIFLHRHSPLS) lie on the Cytoplasmic side of the membrane. A helical membrane pass occupies residues 320–340 (IYAACLSFFFLVACSGATAAL). The Extracellular portion of the chain corresponds to 341 to 354 (LREKIKARLSKKDS).

The protein belongs to the ADIPOR family.

It is found in the cell membrane. Its function is as follows. Steroid membrane receptor. Binds progesterone. May be involved in oocyte maturation. The polypeptide is Membrane progestin receptor beta (PAQR8) (Sus scrofa (Pig)).